The chain runs to 399 residues: Acetate kinase (399 aa).

A Mg(2+)-binding site is contributed by Asn-8. Lys-15 contributes to the ATP binding site. Arg-89 is a binding site for substrate. Asp-146 (proton donor/acceptor) is an active-site residue. ATP-binding positions include 206 to 210 (HVGNG), 283 to 285 (DMR), and 331 to 335 (GMGEN). Glu-383 is a Mg(2+) binding site.

Belongs to the acetokinase family. In terms of assembly, homodimer. Mg(2+) serves as cofactor. Requires Mn(2+) as cofactor.

The protein localises to the cytoplasm. It catalyses the reaction acetate + ATP = acetyl phosphate + ADP. Its pathway is metabolic intermediate biosynthesis; acetyl-CoA biosynthesis; acetyl-CoA from acetate: step 1/2. Its function is as follows. Catalyzes the formation of acetyl phosphate from acetate and ATP. Can also catalyze the reverse reaction. The sequence is that of Acetate kinase from Streptococcus equi subsp. zooepidemicus (strain H70).